Reading from the N-terminus, the 403-residue chain is PP2A regulatory subunit TAP46 (403 aa).

2 disordered regions span residues 158–184 (ERRGRSTKAAALSSPVETEEDDVLDDD) and 351–403 (ANSS…TPCG). Acidic residues-rich tracts occupy residues 174–184 (ETEEDDVLDDD) and 366–375 (EDDEEDDDDA). Basic and acidic residues predominate over residues 376 to 391 (AQDKARAWDDWKDDNP).

It belongs to the IGBP1/TAP42 family.

Its function is as follows. Involved in the regulation of the TOR signaling pathway. Seems to act as a regulator of PP2A catalytic activity. In Nicotiana tabacum (Common tobacco), this protein is PP2A regulatory subunit TAP46.